The following is a 249-amino-acid chain: NAD(P)H-hydrate epimerase (249 aa).

The region spanning 11-233 (AQQIDVELMS…ELGKKHELNI (223 aa)) is the YjeF N-terminal domain. 62 to 66 (NQGGD) provides a ligand contact to (6S)-NADPHX. 2 residues coordinate K(+): Q63 and D127. (6S)-NADPHX contacts are provided by residues 131–137 (GFSFQPP) and D162. S165 serves as a coordination point for K(+).

The protein belongs to the NnrE/AIBP family. The cofactor is K(+).

The protein localises to the cytoplasm. It is found in the mitochondrion. The catalysed reaction is (6R)-NADHX = (6S)-NADHX. It carries out the reaction (6R)-NADPHX = (6S)-NADPHX. Functionally, catalyzes the epimerization of the S- and R-forms of NAD(P)HX, a damaged form of NAD(P)H that is a result of enzymatic or heat-dependent hydration. This is a prerequisite for the S-specific NAD(P)H-hydrate dehydratase to allow the repair of both epimers of NAD(P)HX. The polypeptide is NAD(P)H-hydrate epimerase (Cryptococcus neoformans var. neoformans serotype D (strain JEC21 / ATCC MYA-565) (Filobasidiella neoformans)).